The sequence spans 557 residues: MSGDSERAVAPGVVPAPCASKVELRLSCRHLLDRDPLTKSDPSVVLLQQAQGQWLQVDRTEVVKSSLHPVFSKVFTVDYYFEGVQKLRFEVYDTHGPSGLTCQDDDFLGGMECTLGQIVAQKKMTRPLLLRFGRNAGKSTITVIAEDISGNNGYVELSFQARKLDDKDLFSKSDPFLELYRVNDDGSEQLVYRTEVVKNNLNPVWEPFKVSLNSLCSCEETRPLKCLVWDYDSRGKHDFIGDFTTTFAEMQKAFEEEQQAQWDCVNAKYKQKKRNYKNSGVVILADLKLHRVHSFLDYIMGGCQIHCTVAIDFTASNGDPRNSCSLHHINPYQPNEYLRALVAVGEVCQDYDSDKRFSALGFGARIPPKYEVSHDFAINFNPEDDECEGIQGVVEAYQNCLPKVQLYGPTNVAPIISKVARMAAAEESTGEASQYYILLILTDGVVTDMSDTREAIVRASHLPMSVIIVGVGNADFTDMQILDGDDGVLRSPRGEPALRDIVQFVPFRELKNASPAALAKCVLAEVPKQVVEYYSHKELPPRSLGAQTGEAAASSAP.

C2 domains are found at residues 1–128 (MSGD…TRPL) and 135–263 (NAGK…AQWD). Ca(2+) is bound by residues D168, D174, D230, D232, and D238. Residues 306 to 505 (HCTVAIDFTA…PALRDIVQFV (200 aa)) form the VWFA domain.

The protein belongs to the copine family. Ca(2+) serves as cofactor.

The protein resides in the cytoplasm. The protein localises to the nucleus. Its subcellular location is the cell membrane. Its function is as follows. Calcium-dependent phospholipid-binding protein that may play a role in calcium-mediated intracellular processes. The protein is Copine-7 of Mus musculus (Mouse).